We begin with the raw amino-acid sequence, 230 residues long: Thymidylate kinase (230 aa).

20–27 (GGEGAGKS) is a binding site for ATP.

Belongs to the thymidylate kinase family.

The catalysed reaction is dTMP + ATP = dTDP + ADP. In terms of biological role, phosphorylation of dTMP to form dTDP in both de novo and salvage pathways of dTTP synthesis. This Rhodopseudomonas palustris (strain ATCC BAA-98 / CGA009) protein is Thymidylate kinase.